The sequence spans 344 residues: Phosphoribosylformylglycinamidine cyclo-ligase (344 aa).

This sequence belongs to the AIR synthase family.

Its subcellular location is the cytoplasm. The catalysed reaction is 2-formamido-N(1)-(5-O-phospho-beta-D-ribosyl)acetamidine + ATP = 5-amino-1-(5-phospho-beta-D-ribosyl)imidazole + ADP + phosphate + H(+). It functions in the pathway purine metabolism; IMP biosynthesis via de novo pathway; 5-amino-1-(5-phospho-D-ribosyl)imidazole from N(2)-formyl-N(1)-(5-phospho-D-ribosyl)glycinamide: step 2/2. This chain is Phosphoribosylformylglycinamidine cyclo-ligase, found in Laribacter hongkongensis (strain HLHK9).